Reading from the N-terminus, the 257-residue chain is Protein KlaA (257 aa).

Its function is as follows. Belongs to the kla operon, which is associated with cryptic tellurite resistance, and IncW plasmid fertility inhibition. The sequence is that of Protein KlaA (klaA) from Escherichia coli.